The primary structure comprises 375 residues: PqqA peptide cyclase (375 aa).

In terms of domain architecture, Radical SAM core spans isoleucine 18–leucine 235. Cysteine 32, cysteine 36, and cysteine 39 together coordinate [4Fe-4S] cluster.

Belongs to the radical SAM superfamily. PqqE family. Interacts with PqqD. The interaction is necessary for activity of PqqE. [4Fe-4S] cluster serves as cofactor.

The enzyme catalyses [PQQ precursor protein] + S-adenosyl-L-methionine = E-Y cross-linked-[PQQ precursor protein] + 5'-deoxyadenosine + L-methionine + H(+). It functions in the pathway cofactor biosynthesis; pyrroloquinoline quinone biosynthesis. Its function is as follows. Catalyzes the cross-linking of a glutamate residue and a tyrosine residue in the PqqA protein as part of the biosynthesis of pyrroloquinoline quinone (PQQ). The protein is PqqA peptide cyclase of Rhizobium meliloti (strain 1021) (Ensifer meliloti).